Reading from the N-terminus, the 396-residue chain is MPLYLKAEKIQSWRVLIMACAGFIFNTTEFVPVAMLSDIAQSFDMQTADTGLMMTVYAWTVLIMSLPAMLATGNMERKSLLIKLFIIFIVGHILSVIAWNFWILLLARMCIALAHSVFWSITASLVMRISPKHKKTQALGMLAIGTALATILGLPIGRIVGQLVGWRVTFGIIAVLALSIMFLIIRLLPNLPSKNAGSIASLPLLAKRPLLLWLYVTTAIVISAHFTAYTYIEPFMIDVGHLDPNFATAVLLVFGFSGIAASLLFNRLYRFAPTKFIVVSMSLLMFSLLLLLFSTETIIAMFSLVFIWGIGISCIGLSLQMRVLKLAPDATDVATAIYSGIFNAGIGAGALFGNLATTYLGLNEIGYTGAALGLIGFIIFITTHLKYRHTFLLQNK.

Transmembrane regions (helical) follow at residues 15 to 35, 51 to 71, 84 to 104, 109 to 129, 137 to 157, 168 to 188, 209 to 229, 245 to 265, 276 to 296, 297 to 317, 333 to 353, and 365 to 385; these read VLIMACAGFIFNTTEFVPVAM, GLMMTVYAWTVLIMSLPAMLA, LFIIFIVGHILSVIAWNFWIL, MCIALAHSVFWSITASLVMRI, QALGMLAIGTALATILGLPIG, VTFGIIAVLALSIMFLIIRLL, PLLLWLYVTTAIVISAHFTAY, NFATAVLLVFGFSGIAASLLF, FIVVSMSLLMFSLLLLLFSTE, TIIAMFSLVFIWGIGISCIGL, VATAIYSGIFNAGIGAGALFG, and IGYTGAALGLIGFIIFITTHL.

The protein belongs to the major facilitator superfamily. SotB (TC 2.A.1.2) family.

Its subcellular location is the cell inner membrane. Its function is as follows. Involved in the efflux of sugars. The physiological role may be the reduction of the intracellular concentration of toxic sugars or sugar metabolites. The protein is Probable sugar efflux transporter of Haemophilus influenzae (strain PittGG).